The primary structure comprises 426 residues: Glutamate-1-semialdehyde 2,1-aminomutase 2 (426 aa).

At K265 the chain carries N6-(pyridoxal phosphate)lysine.

This sequence belongs to the class-III pyridoxal-phosphate-dependent aminotransferase family. HemL subfamily. Homodimer. It depends on pyridoxal 5'-phosphate as a cofactor.

The protein resides in the cytoplasm. The catalysed reaction is (S)-4-amino-5-oxopentanoate = 5-aminolevulinate. The protein operates within porphyrin-containing compound metabolism; protoporphyrin-IX biosynthesis; 5-aminolevulinate from L-glutamyl-tRNA(Glu): step 2/2. This Lachnoclostridium phytofermentans (strain ATCC 700394 / DSM 18823 / ISDg) (Clostridium phytofermentans) protein is Glutamate-1-semialdehyde 2,1-aminomutase 2.